A 498-amino-acid chain; its full sequence is MRTNPTTSRPGVSTIEEKSTGRIDQIIGPVLDVTFPPGKLPYIYNALVVKSRDTDGKQINVTCEVQQLLGNNRVRAVAMSATDGLMRGMEVIDTGAPLSVPVGGATLGRIFNVLGEPVDNLGPVDTSATFPIHRSAPAFIELDTKLSIFETGIKVVDLLAPYRRGGKIGLFGGAGVGKTVLIMELINNIAKAHGGVSVFGGVGERTREGNDLYMEMKESGVINEKNLEESKVALVYGQMNEPPGARMRVGLTALTMAEYFRDVNKQDVLLFIDNIFRFVQAGSEVSALLGRMPSAVGYQPTLSTEMGSLQERITSTKKGSITSIQAVYVPADDLTDPAPATTFAHLDATTVLSRGLASKGIYPAVDPLDSTSTMLQPRIVGNEHYETAQRVKQTLQRYKELQDIIAILGLDELSEEDRLTVARARKIERFLSQPFFVAEVFTGSPGKYVGLAETIRGFQLILSGELDGLPEQAFYLVGNIDEASTKAINLEEENKLKK.

An ATP-binding site is contributed by 172–179 (GGAGVGKT).

It belongs to the ATPase alpha/beta chains family. In terms of assembly, F-type ATPases have 2 components, CF(1) - the catalytic core - and CF(0) - the membrane proton channel. CF(1) has five subunits: alpha(3), beta(3), gamma(1), delta(1), epsilon(1). CF(0) has four main subunits: a(1), b(1), b'(1) and c(9-12).

The protein localises to the plastid. It localises to the chloroplast thylakoid membrane. It catalyses the reaction ATP + H2O + 4 H(+)(in) = ADP + phosphate + 5 H(+)(out). Functionally, produces ATP from ADP in the presence of a proton gradient across the membrane. The catalytic sites are hosted primarily by the beta subunits. This chain is ATP synthase subunit beta, chloroplastic, found in Oryza nivara (Indian wild rice).